Reading from the N-terminus, the 201-residue chain is Cytochrome c4 (201 aa).

Residues 1–20 (MNKLLVSLLLTLGLTGLAHA) form the signal peptide. 8 residues coordinate heme c: cysteine 34, cysteine 37, histidine 38, methionine 77, cysteine 130, cysteine 133, histidine 134, and methionine 178.

Binds 2 heme c groups covalently per subunit.

The protein localises to the periplasm. Functionally, diheme, high potential cytochrome c believed to be an intermediate electron donor to terminal oxidation systems. This chain is Cytochrome c4 (cc4), found in Pseudomonas aeruginosa (strain ATCC 15692 / DSM 22644 / CIP 104116 / JCM 14847 / LMG 12228 / 1C / PRS 101 / PAO1).